The chain runs to 147 residues: HTH-type transcriptional regulator HmrR (147 aa).

The HTH merR-type domain occupies 1 to 69; that stretch reads MNIGEASKVS…VEQIKELLAL (69 aa). Positions 4–23 form a DNA-binding region, H-T-H motif; sequence GEASKVSGVSSKMIRYYEQI.

In terms of assembly, homodimer.

The protein localises to the cytoplasm. In terms of biological role, regulates the transcription of actP. It detects cytoplasmic copper stress and activates transcription in response to increasing copper concentrations. In the absence of copper, it negatively regulates the transcription of actP. The polypeptide is HTH-type transcriptional regulator HmrR (hmrR) (Sinorhizobium medicae (strain WSM419) (Ensifer medicae)).